The following is a 230-amino-acid chain: Protein FAM3A (230 aa).

The first 33 residues, 1–33, serve as a signal peptide directing secretion; that stretch reads MRLAGPLRIVALVVSVGLTWIVVSILLGGPGSG. Disulfide bonds link Cys-59/Cys-87 and Cys-65/Cys-222. One can recognise a GG-type lectin domain in the interval 68–226; that stretch reads EHLAFRVVSG…LEMEGCIPRR (159 aa).

Belongs to the FAM3 family.

The protein resides in the secreted. This chain is Protein FAM3A (FAM3A), found in Pongo abelii (Sumatran orangutan).